The following is a 645-amino-acid chain: Aminopeptidase P1 (645 aa).

Ser2 carries the N-acetylserine modification. A peptide-binding residues include Arg69 and His420. The Mn(2+) site is built by Asp440, Asp451, and His514. A peptide is bound by residues His514, His523, and Glu549. 2 residues coordinate Mn(2+): Glu549 and Glu563.

Belongs to the peptidase M24B family. Homodimer. Interacts with N-1-naphthylphthalamic acid (NPA). The cofactor is Mn(2+). Zn(2+) is required as a cofactor. In terms of processing, glycosylated. Also present in a non-glycosylated form. As to expression, ubiquitous with preferential expression in 5 days-old seedlings, roots, flowers, inflorescences and rosette leaves (at protein levels).

The protein localises to the cytoplasm. It localises to the cell membrane. It is found in the microsome membrane. It catalyses the reaction Release of any N-terminal amino acid, including proline, that is linked to proline, even from a dipeptide or tripeptide.. Inhibited by EGTA and apstatin, and, to some extent, by the flavonoid kaempferol. Functionally, catalyzes the removal of a penultimate prolyl residue from the N-termini of peptides, such as Arg-Pro-Pro. Aminopeptidase that binds to the auxin transport inhibitor N-1-naphthylphthalamic acid (NPA). May play a negative role in the regulation of PIN auxin transport proteins. This is Aminopeptidase P1 from Arabidopsis thaliana (Mouse-ear cress).